The primary structure comprises 201 residues: ADP-ribosylation factor-like protein 4D (201 aa).

G2 carries the N-myristoyl glycine lipid modification. Residues 28 to 35 (GLDSAGKT), 76 to 80 (DVGGQ), and 135 to 138 (NKQD) contribute to the GTP site.

This sequence belongs to the small GTPase superfamily. Arf family. As to quaternary structure, interacts with CYTH2; the interaction is direct and ARL4D GTP-dependent. Does not interact with ARL4D.

The protein resides in the nucleus. The protein localises to the nucleolus. It localises to the cell membrane. It is found in the cytoplasm. Functionally, small GTP-binding protein which cycles between an inactive GDP-bound and an active GTP-bound form, and the rate of cycling is regulated by guanine nucleotide exchange factors (GEF) and GTPase-activating proteins (GAP). GTP-binding protein that does not act as an allosteric activator of the cholera toxin catalytic subunit. Recruits CYTH1, CYTH2, CYTH3 and CYTH4 to the plasma membrane in GDP-bound form. This Mus musculus (Mouse) protein is ADP-ribosylation factor-like protein 4D (Arl4d).